We begin with the raw amino-acid sequence, 384 residues long: Succinyl-diaminopimelate desuccinylase (384 aa).

Residue His73 coordinates Zn(2+). Asp75 is an active-site residue. Residue Asp106 participates in Zn(2+) binding. Residue Glu140 is the Proton acceptor of the active site. Glu141, Glu169, and His358 together coordinate Zn(2+).

The protein belongs to the peptidase M20A family. DapE subfamily. In terms of assembly, homodimer. It depends on Zn(2+) as a cofactor. The cofactor is Co(2+).

It carries out the reaction N-succinyl-(2S,6S)-2,6-diaminopimelate + H2O = (2S,6S)-2,6-diaminopimelate + succinate. The protein operates within amino-acid biosynthesis; L-lysine biosynthesis via DAP pathway; LL-2,6-diaminopimelate from (S)-tetrahydrodipicolinate (succinylase route): step 3/3. Functionally, catalyzes the hydrolysis of N-succinyl-L,L-diaminopimelic acid (SDAP), forming succinate and LL-2,6-diaminopimelate (DAP), an intermediate involved in the bacterial biosynthesis of lysine and meso-diaminopimelic acid, an essential component of bacterial cell walls. This Pelagibacter ubique (strain HTCC1062) protein is Succinyl-diaminopimelate desuccinylase.